The primary structure comprises 246 residues: Polyhedrin (246 aa).

It belongs to the polyhedrin family.

Functionally, major component of the virus occlusion bodies, which are large proteinaceous structures (polyhedra), that protect the virus from the outside environment for extended periods until they are ingested by insect larvae. The polypeptide is Polyhedrin (PH) (Lepidoptera (butterflies and moths)).